A 644-amino-acid polypeptide reads, in one-letter code: Exoribonuclease 2 (644 aa).

The region spanning 189-516 is the RNB domain; sequence RQDLTALNFV…NHRLLKAVIK (328 aa). Residues 561 to 643 form the S1 motif domain; the sequence is NTRFAAEIID…ETRSIIARPA (83 aa).

It belongs to the RNR ribonuclease family. RNase II subfamily.

The protein resides in the cytoplasm. It carries out the reaction Exonucleolytic cleavage in the 3'- to 5'-direction to yield nucleoside 5'-phosphates.. Functionally, involved in mRNA degradation. Hydrolyzes single-stranded polyribonucleotides processively in the 3' to 5' direction. The polypeptide is Exoribonuclease 2 (Salmonella enteritidis PT4 (strain P125109)).